The sequence spans 334 residues: Ketol-acid reductoisomerase (NADP(+)) (334 aa).

The KARI N-terminal Rossmann domain maps to 1 to 181 (MNIYYDKNAD…GGGRTGILET (181 aa)). NADP(+) contacts are provided by residues 24–27 (YGSQ), R47, S50, S52, and 82–85 (DEFQ). The active site involves H107. G133 serves as a coordination point for NADP(+). The 142-residue stretch at 182 to 323 (SFKDETETDL…ESLRSMMPWI (142 aa)) folds into the KARI C-terminal knotted domain. Residues D190, E194, E226, and E230 each contribute to the Mg(2+) site. S251 is a binding site for substrate.

It belongs to the ketol-acid reductoisomerase family. It depends on Mg(2+) as a cofactor.

The enzyme catalyses (2R)-2,3-dihydroxy-3-methylbutanoate + NADP(+) = (2S)-2-acetolactate + NADPH + H(+). It carries out the reaction (2R,3R)-2,3-dihydroxy-3-methylpentanoate + NADP(+) = (S)-2-ethyl-2-hydroxy-3-oxobutanoate + NADPH + H(+). The protein operates within amino-acid biosynthesis; L-isoleucine biosynthesis; L-isoleucine from 2-oxobutanoate: step 2/4. Its pathway is amino-acid biosynthesis; L-valine biosynthesis; L-valine from pyruvate: step 2/4. Its function is as follows. Involved in the biosynthesis of branched-chain amino acids (BCAA). Catalyzes an alkyl-migration followed by a ketol-acid reduction of (S)-2-acetolactate (S2AL) to yield (R)-2,3-dihydroxy-isovalerate. In the isomerase reaction, S2AL is rearranged via a Mg-dependent methyl migration to produce 3-hydroxy-3-methyl-2-ketobutyrate (HMKB). In the reductase reaction, this 2-ketoacid undergoes a metal-dependent reduction by NADPH to yield (R)-2,3-dihydroxy-isovalerate. This is Ketol-acid reductoisomerase (NADP(+)) from Vesicomyosocius okutanii subsp. Calyptogena okutanii (strain HA).